The sequence spans 82 residues: Small ribosomal subunit protein uS17c (82 aa).

Belongs to the universal ribosomal protein uS17 family. Part of the 30S ribosomal subunit.

It localises to the plastid. It is found in the chloroplast. In terms of biological role, one of the primary rRNA binding proteins, it binds specifically to the 5'-end of 16S ribosomal RNA. This chain is Small ribosomal subunit protein uS17c (rps17), found in Cyanidioschyzon merolae (strain NIES-3377 / 10D) (Unicellular red alga).